The sequence spans 245 residues: Exosome complex component RRP41 (245 aa).

Alanine 2 is modified (N-acetylalanine).

This sequence belongs to the RNase PH family. As to quaternary structure, component of the RNA exosome core complex (Exo-9), composed of EXOSC1, EXOSC2, EXOSC3, EXOSC4, EXOSC5, EXOSC6, EXOSC7, EXOSC8 and EXOSC9; within the complex interacts with EXOSC2, EXOSC7 and EXOSC9. The catalytically inactive RNA exosome core complex (Exo-9) associates with the catalytic subunit EXOSC10/RRP6. Exo-9 may associate with DIS3 to form the nucleolar exosome complex, or DIS3L to form the cytoplasmic exosome complex. Exo-9 is formed by a hexameric base ring consisting of the heterodimers EXOSC4-EXOSC9, EXOSC5-EXOSC8 and EXOSC6-EXOSC7, and a cap ring consisting of EXOSC1, EXOSC2 and EXOSC3. The RNA exosome complex associates with cofactors C1D/RRP47, MPHOSPH6/MPP6 and MTREX/MTR4. Interacts with DDX60. Interacts with DIS3; the interaction is direct.

The protein resides in the cytoplasm. The protein localises to the nucleus. It is found in the nucleolus. It localises to the nucleoplasm. Its function is as follows. Non-catalytic component of the RNA exosome complex which has 3'-&gt;5' exoribonuclease activity and participates in a multitude of cellular RNA processing and degradation events. In the nucleus, the RNA exosome complex is involved in proper maturation of stable RNA species such as rRNA, snRNA and snoRNA, in the elimination of RNA processing by-products and non-coding 'pervasive' transcripts, such as antisense RNA species and promoter-upstream transcripts (PROMPTs), and of mRNAs with processing defects, thereby limiting or excluding their export to the cytoplasm. The RNA exosome may be involved in Ig class switch recombination (CSR) and/or Ig variable region somatic hypermutation (SHM) by targeting AICDA deamination activity to transcribed dsDNA substrates. In the cytoplasm, the RNA exosome complex is involved in general mRNA turnover and specifically degrades inherently unstable mRNAs containing AU-rich elements (AREs) within their 3' untranslated regions, and in RNA surveillance pathways, preventing translation of aberrant mRNAs. It seems to be involved in degradation of histone mRNA. The catalytic inactive RNA exosome core complex of 9 subunits (Exo-9) is proposed to play a pivotal role in the binding and presentation of RNA for ribonucleolysis, and to serve as a scaffold for the association with catalytic subunits and accessory proteins or complexes. EXOSC4 binds to ARE-containing RNAs. The chain is Exosome complex component RRP41 (EXOSC4) from Homo sapiens (Human).